Reading from the N-terminus, the 304-residue chain is Aspartate carbamoyltransferase catalytic subunit (304 aa).

Arginine 49 and threonine 50 together coordinate carbamoyl phosphate. Residue lysine 77 participates in L-aspartate binding. Carbamoyl phosphate-binding residues include arginine 99, histidine 127, and glutamine 130. L-aspartate-binding residues include arginine 160 and arginine 211. Carbamoyl phosphate-binding residues include alanine 252 and proline 253.

Belongs to the aspartate/ornithine carbamoyltransferase superfamily. ATCase family. As to quaternary structure, heterododecamer (2C3:3R2) of six catalytic PyrB chains organized as two trimers (C3), and six regulatory PyrI chains organized as three dimers (R2).

The catalysed reaction is carbamoyl phosphate + L-aspartate = N-carbamoyl-L-aspartate + phosphate + H(+). It functions in the pathway pyrimidine metabolism; UMP biosynthesis via de novo pathway; (S)-dihydroorotate from bicarbonate: step 2/3. Its function is as follows. Catalyzes the condensation of carbamoyl phosphate and aspartate to form carbamoyl aspartate and inorganic phosphate, the committed step in the de novo pyrimidine nucleotide biosynthesis pathway. The sequence is that of Aspartate carbamoyltransferase catalytic subunit from Bacillus cytotoxicus (strain DSM 22905 / CIP 110041 / 391-98 / NVH 391-98).